The primary structure comprises 343 residues: Dipeptide transport system permease protein DppC (343 aa).

Helical transmembrane passes span leucine 44 to valine 64, leucine 144 to isoleucine 164, leucine 195 to tryptophan 215, glycine 259 to leucine 279, and phenylalanine 309 to glycine 329. The ABC transmembrane type-1 domain occupies leucine 140–glycine 329.

The protein belongs to the binding-protein-dependent transport system permease family. OppBC subfamily. In terms of assembly, the complex is composed of two ATP-binding proteins (DppD and DppF), two transmembrane proteins (DppB and DppC) and a solute-binding protein (DppA).

It is found in the cell membrane. Its function is as follows. Part of the ABC transporter DppABCDF involved in dipeptide transport. Responsible for the translocation of the substrate across the membrane. This chain is Dipeptide transport system permease protein DppC, found in Lactococcus lactis subsp. cremoris (strain MG1363).